A 587-amino-acid polypeptide reads, in one-letter code: MTKKESAVDVLIIGAGPAGLIAAMWMAKCGITTRVVEQRPYQLRVGGADGIHPRSMEMFESFGIDQEITQVWEPITGWALWCRNAEGTLARSDRMDNPTPVRCRWGPGLLQQGIIERIIKEHISEQPSVRIEHETVSASLVIMEDALDKPDSHPCVITLRHDDSAGGSEELVRAKYVIGADGARSWTRKQLGFKMEGTRTRSVWAVTDLVVVSDFPDIRLCTTINSYGEGGLFFLRRERGLTRFYVQLNRADEVEFPAASITQELIIERLQRLLRPYTLTVKRCEWWSSYTVAHYLSDGMTKHDRVFLVGDAVHNHSPLVGLGMNISMQDSYNLGWKLAGVLKKELNPSILSTYETERRPVAAELIETDRFHLQLFDTATVTGSEPAWMLEREEALQPSMQGFAVHYQDPLLTVATEKECRPDAVIPGKRFPQLNVSNHATGKVYSIQSLLKSKGKFHVIVFAGDLSQPLELNRFNTCGTALQQIEEQILPASMGKFNVIAVHRARKTAIELASLADIFFPVDETTGRDYNRVYCDMETSYEEAGIGEQGAVVLVRPDQYVGWCGEVEDVQGLTGYLQPIFEAKKHA.

Residues 7–27 traverse the membrane as a helical segment; that stretch reads AVDVLIIGAGPAGLIAAMWMA. 2 residues coordinate FAD: Tyr-245 and Asp-311.

This sequence belongs to the PheA/TfdB FAD monooxygenase family. As to quaternary structure, homodimer. It depends on FAD as a cofactor.

It is found in the membrane. It catalyses the reaction cyclo(L-arginyl-L-dehydrotyrosyl) + AH2 + O2 = cyclo(L-arginyl-(Z)-dehydro-3,4-dihydroxytyrosyl) + A + H2O. The protein operates within secondary metabolite biosynthesis. Functionally, FAD-dependent monooxygenase; part of the ank cluster that mediates the biosynthesis of NK13650 C, a highly modified cyclo-arginine-tyrosine dipeptide. AnkC uses as substrate the dehydro-cyclodipeptide intermediate generated by the monooxygase ankB and acts as a hydroxylase that installs the m-OH through a canonical flavin-dependent aromatic hydroxylation mechanism. Within the pathway, the cyclodipeptide synthase ankA acts as the scaffold-generating enzyme and is responsible for formation of the cyclo-Arg-Tyr diketopiperazine (cRY) from L-Arg and L-Tyr. The ankA product cRY is desaturated by the cytochrome P450 monooxygenase ankB to yield a dehydro-cyclodipeptide intermediate. The FAD-dependent monooxygenase ankC then installs the m-OH, ankD catalyzes the attachment of L-homoserine, and ankE ligates citrate to the ankD product to yield NK13650 B. The O-methyltransferase ankF is responsible for methylation of the C-17 phenol group of NK13650 B to produce NK13650 D. Amidation of NK13650 D with L-Asp by ankG then leads to the production of NK13650 C, whereas amidation of NK13650 B produces NK13650 A. In Aspergillus thermomutatus (Neosartorya pseudofischeri), this protein is FAD-dependent monooxygenase ankC.